Reading from the N-terminus, the 1274-residue chain is Myosin-1 (1274 aa).

Residues 1–28 form a disordered region; that stretch reads MAPSKKAGKKGAVGGFLSGASKPQKVQK. Positions 41-721 constitute a Myosin motor domain; that stretch reads AGVPDMTLLS…TLFYLEGERD (681 aa). Residue 134–141 participates in ATP binding; it reads GESGAGKT. A Phosphoserine modification is found at Ser363. The segment at 410–492 is actin-binding; the sequence is VIGVLDIYGF…AGIFATLNDA (83 aa). 2 consecutive IQ domains span residues 725 to 745 and 746 to 771; these read HTMA…KHEA and ATKI…YGHQ. The TH1 domain occupies 779 to 969; that stretch reads RRRFSLLGMR…TIQVGSGEPP (191 aa). 3 disordered regions span residues 951–1029, 1042–1071, and 1116–1248; these read RGDA…PVVT, ARAP…PKEF, and PSNY…QVAQ. Polar residues predominate over residues 957–974; sequence KSHTIQVGSGEPPNSLSN. The segment covering 1042–1053 has biased composition (low complexity); that stretch reads ARAPPSIPGRAA. Pro residues-rich tracts occupy residues 1054–1067 and 1126–1138; these read APPP…PAGP and APPP…PPSR. An SH3 domain is found at 1067–1125; that stretch reads PPKEFYKALYNFTGQEGEMNLVKGEEVEVKEKDDNGWWMVVKNGQEGWAPSNYLKKVEQ. 2 stretches are compositionally biased toward low complexity: residues 1139–1157 and 1170–1226; these read PVAA…PAVT and AASA…IGGK.

It belongs to the TRAFAC class myosin-kinesin ATPase superfamily. Myosin family. In terms of processing, phosphorylation of the TEDS site (Ser-363) is required for the polarization of the actin cytoskeleton. Phosphorylation probably activates the myosin-I ATPase activity.

Its subcellular location is the cytoplasm. The protein resides in the cytoskeleton. The protein localises to the actin patch. Its function is as follows. Type-I myosin implicated in the organization of the actin cytoskeleton. Required for proper actin cytoskeleton polarization. At the cell cortex, assembles in patch-like structures together with proteins from the actin-polymerizing machinery and promotes actin assembly. Functions as actin nucleation-promoting factor (NPF) for the Arp2/3 complex. In Cryptococcus neoformans var. neoformans serotype D (strain B-3501A) (Filobasidiella neoformans), this protein is Myosin-1 (MYO1).